The sequence spans 2789 residues: Testis-expressed protein 15 (2789 aa).

The span at 34 to 46 (HNNTGSSTVTTSK) shows a compositional bias: polar residues. 5 disordered regions span residues 34-99 (HNNT…SSEV), 169-191 (ENQNHSEEKAQRAQQESGNAYTK), 1063-1166 (FSSK…EHQP), 2303-2331 (KNISNSSKKRPSTVDKCEDSQEQQQDTTV), and 2351-2379 (KATFKHPRTTGSHPKSENKIVPSSCDSLK). A compositionally biased stretch (basic and acidic residues) spans 47–59 (SIKDPRLMRREES). The span at 80 to 98 (DNVNSEIKSTPSNSASSSE) shows a compositional bias: polar residues. Residues 170-179 (NQNHSEEKAQ) show a composition bias toward basic and acidic residues. Residues 1063–1077 (FSSKRKYDKRRKKRA) are compositionally biased toward basic residues. Composition is skewed to low complexity over residues 1106–1116 (RKSMASSVSKS) and 1134–1160 (SQLPVSSTSQSTSQSVYYNSSVSNPSL).

Belongs to the TEX15 family. Interacts with PIWIL4 and PIWIL2. As to expression, expressed in testis, predominantly in germ cells. Low expression, if any, in ovary. Also expressed in several cancers.

Its subcellular location is the cytoplasm. The protein localises to the nucleus. Functionally, required during spermatogenesis for normal chromosome synapsis and meiotic recombination in germ cells. Necessary for formation of DMC1 and RAD51 foci on meiotic chromosomes, suggesting a specific role in DNA double-stranded break repair. Essential executor of PIWIL4-piRNA pathway directed transposon DNA methylation and silencing in the male embryonic germ cells. PIWIL4-piRNA binds to nascent transposon transcripts and interacts with TEX15, which may in turn recruit the epigenetic silencing machinery to the transposon loci. Not required for piRNA biosynthesis. This is Testis-expressed protein 15 (TEX15) from Homo sapiens (Human).